We begin with the raw amino-acid sequence, 408 residues long: Aminoacylase-1B (408 aa).

Position 80 (His-80) interacts with Zn(2+). Residue Asp-82 is part of the active site. Residue Asp-113 coordinates Zn(2+). Glu-147 acts as the Proton acceptor in catalysis. Zn(2+)-binding residues include Glu-148, Glu-175, and His-373. Position 408 is a phosphoserine (Ser-408).

The protein belongs to the peptidase M20A family. As to quaternary structure, homodimer. The cofactor is Zn(2+). In terms of tissue distribution, expressed in kidney.

The protein localises to the cytoplasm. It carries out the reaction an N-acyl-L-amino acid + H2O = an L-alpha-amino acid + a carboxylate. The catalysed reaction is an N-acetyl-L-cysteine-S-conjugate + H2O = an S-substituted L-cysteine + acetate. Functionally, involved in the hydrolysis of N-acylated or N-acetylated amino acids (except L-aspartate). The polypeptide is Aminoacylase-1B (Acy1b) (Rattus norvegicus (Rat)).